Consider the following 64-residue polypeptide: Alpha-conotoxin CnIL (64 aa).

The first 21 residues, 1–21, serve as a signal peptide directing secretion; that stretch reads MGMRMMFTVFLLVVLTTTVVS. Positions 22–49 are excised as a propeptide; that stretch reads FPSDSASDGRDDEAKDERSDIYESKRDG. Intrachain disulfides connect Cys-51–Cys-56 and Cys-52–Cys-62. The residue at position 62 (Cys-62) is a Cysteine amide.

The protein belongs to the conotoxin A superfamily. In terms of tissue distribution, expressed by the venom duct.

Its subcellular location is the secreted. This chain is Alpha-conotoxin CnIL, found in Conus consors (Singed cone).